The following is a 340-amino-acid chain: Erythroferrone (340 aa).

A signal peptide spans 1–24 (MASTRRPVGARTLLACASLLAAMG). Disordered regions lie at residues 30–63 (SAEP…IAHA), 79–112 (SDKG…GPPG), and 141–161 (HCTR…PAAQ). Pro residues predominate over residues 40 to 58 (PQPPGAELPAPPANSPPEP). The span at 84-95 (NSKRRSKARRLK) shows a compositional bias: basic residues. A hydroxyproline mark is found at proline 99, proline 101, proline 102, proline 104, proline 105, and proline 107. A compositionally biased stretch (pro residues) spans 99–112 (PGPPGPPGPQGPPG). Over residues 145 to 154 (DLTTPASGSP) the composition is skewed to polar residues. A C1q domain is found at 185–340 (APRVEAAFHC…SHFSAILLGL (156 aa)). Residues asparagine 229, asparagine 281, asparagine 292, and asparagine 319 are each glycosylated (N-linked (GlcNAc...) asparagine).

The protein belongs to the adipolin/erythroferrone family. As to quaternary structure, homodimer; disulfide-linked. Forms trimer, hexamers and higher molecular weight oligomers. May form heteromeric complexes with C1QTNF2 and C1QTNF12 and, to a lesser extent, with C1QTNF5 and C1QTNF10. Interacts with BMP5 and BMP7; the interaction inhibits BMP-induced transcription of HAMP. Interacts with BMP6; the interaction inhibits BMP-induced transcription of HAMP. Interacts with BMP2. Interacts with heterodimers composed of BMP2 and BMP6 in vitro, the interaction inhibits the heterodimer binding to its receptor BMPR1A /ALK3 and thereby suppresses expression of HAMP. N-glycosylated; required for secretion of the mature protein. As to expression, expressed in the soleus muscle in the leg (at protein level). Found in blood (at protein level). Weakly expressed in the heart (at protein level). Predominantly expressed in skeletal muscle and, at much lower levels, in other tissues, including lung, eye, smooth muscle, brain and kidney. Within skeletal muscles, higher expression levels in soleus as compared with plantaris. Expressed in osteoblasts, mature osteoclasts and erythroblasts. When fasting, females tend to have higher circulating levels than males. Obese mice tend to have lower expression and circulating levels as compared to lean animals. Following EPO treatment, only expressed in bone marrow and spleen.

It localises to the secreted. In terms of biological role, iron-regulatory hormone that acts as an erythroid regulator after hemorrhage: produced by erythroblasts following blood loss and mediates suppression of hepcidin (HAMP) expression in the liver, thereby promoting increased iron absorption and mobilization from stores. Promotes lipid uptake into adipocytes and hepatocytes via transcriptional up-regulation of genes involved in fatty acid uptake. Inhibits apoptosis and inflammatory response in cardiomyocytes via promotion of sphingosine-1-phosphate (S1P) and cAMP-dependent activation of AKT signaling. Inhibits autophagy induced by nutrient deficiency in hepatocytes via promoting the phosphorylation of IRS1, AKT, and MTOR, and thereby subsequent activation of the AKT-MTOR signaling pathway. Negatively regulates the differentiation of osteoblasts, potentially via sequestering BMP2, and thereby inhibits the activation of SMAD signaling. The reduction in BMP2 signaling in osteoblasts also results in an increase in expression of the osteoclastogenesis-promoting factors TNFSF11/RANKL and SOST, thereby indirectly promotes bone resorption. The sequence is that of Erythroferrone from Mus musculus (Mouse).